The chain runs to 72 residues: Translation initiation factor IF-1 (72 aa).

Residues 1-72 (MAKDDVIEID…DKGRITYRYK (72 aa)) enclose the S1-like domain.

This sequence belongs to the IF-1 family. As to quaternary structure, component of the 30S ribosomal translation pre-initiation complex which assembles on the 30S ribosome in the order IF-2 and IF-3, IF-1 and N-formylmethionyl-tRNA(fMet); mRNA recruitment can occur at any time during PIC assembly.

It is found in the cytoplasm. In terms of biological role, one of the essential components for the initiation of protein synthesis. Stabilizes the binding of IF-2 and IF-3 on the 30S subunit to which N-formylmethionyl-tRNA(fMet) subsequently binds. Helps modulate mRNA selection, yielding the 30S pre-initiation complex (PIC). Upon addition of the 50S ribosomal subunit IF-1, IF-2 and IF-3 are released leaving the mature 70S translation initiation complex. The polypeptide is Translation initiation factor IF-1 (Campylobacter curvus (strain 525.92)).